Here is a 199-residue protein sequence, read N- to C-terminus: Recombination protein RecR (199 aa).

Residues cysteine 57 to cysteine 72 form a C4-type zinc finger. The region spanning serine 80 to proline 174 is the Toprim domain.

It belongs to the RecR family.

Functionally, may play a role in DNA repair. It seems to be involved in an RecBC-independent recombinational process of DNA repair. It may act with RecF and RecO. This Stutzerimonas stutzeri (strain A1501) (Pseudomonas stutzeri) protein is Recombination protein RecR.